A 280-amino-acid polypeptide reads, in one-letter code: 2,3,4,5-tetrahydropyridine-2,6-dicarboxylate N-succinyltransferase (280 aa).

Positions 107 and 144 each coordinate substrate.

The protein belongs to the transferase hexapeptide repeat family. As to quaternary structure, homotrimer.

The protein localises to the cytoplasm. It carries out the reaction (S)-2,3,4,5-tetrahydrodipicolinate + succinyl-CoA + H2O = (S)-2-succinylamino-6-oxoheptanedioate + CoA. It participates in amino-acid biosynthesis; L-lysine biosynthesis via DAP pathway; LL-2,6-diaminopimelate from (S)-tetrahydrodipicolinate (succinylase route): step 1/3. The protein is 2,3,4,5-tetrahydropyridine-2,6-dicarboxylate N-succinyltransferase of Paramagnetospirillum magneticum (strain ATCC 700264 / AMB-1) (Magnetospirillum magneticum).